The primary structure comprises 168 residues: Transcription antitermination protein NusB (168 aa).

The tract at residues 147-168 is disordered; sequence RGLINNSSRNTSRSEEKHSTEK. Basic and acidic residues predominate over residues 158 to 168; sequence SRSEEKHSTEK.

This sequence belongs to the NusB family.

In terms of biological role, involved in transcription antitermination. Required for transcription of ribosomal RNA (rRNA) genes. Binds specifically to the boxA antiterminator sequence of the ribosomal RNA (rrn) operons. The protein is Transcription antitermination protein NusB of Chlorobium phaeobacteroides (strain BS1).